The chain runs to 246 residues: 5'-nucleotidase SurE (246 aa).

A divalent metal cation is bound by residues aspartate 8, aspartate 9, serine 39, and asparagine 91.

This sequence belongs to the SurE nucleotidase family. Requires a divalent metal cation as cofactor.

It localises to the cytoplasm. It catalyses the reaction a ribonucleoside 5'-phosphate + H2O = a ribonucleoside + phosphate. Nucleotidase that shows phosphatase activity on nucleoside 5'-monophosphates. This is 5'-nucleotidase SurE from Mannheimia succiniciproducens (strain KCTC 0769BP / MBEL55E).